Consider the following 511-residue polypeptide: Zinc finger CCCH-type with G patch domain-containing protein (511 aa).

Met-1 bears the N-acetylmethionine mark. Ser-70 is subject to Phosphoserine. Positions 92–129 (PGAPCNDSETAPGSEVQPGSTSSALEEEEEDPDLEELS) are disordered. Positions 98 to 115 (DSETAPGSEVQPGSTSSA) are enriched in polar residues. Residues 116–127 (LEEEEEDPDLEE) show a composition bias toward acidic residues. The C3H1-type zinc finger occupies 174-200 (KSLKPCPFFLEGKCRFKENCRFSHGQV). The interval 266 to 291 (PPLRTEATESSDSDTGDASDSSYARV) is disordered. Ser-276 carries the phosphoserine modification. Thr-280 bears the Phosphothreonine mark. One can recognise a G-patch domain in the interval 313–359 (TRGIGSKLLVKMGYEFGKGLGRHAEGRVEPIHAVVLPRGKSLDQCAE). A Phosphoserine modification is found at Ser-353. Disordered stretches follow at residues 363-393 (KKTK…PPRN) and 490-511 (AQEA…MTEF). The span at 491–511 (QEADLQRKQRKADTHRKMTEF) shows a compositional bias: basic and acidic residues.

Interacts with CHD4/Mi-2; the interaction is direct.

The protein localises to the nucleus. Its function is as follows. Transcription repressor that specifically binds the 5'-GGAG[GA]A[GA]A-3' consensus sequence. Represses transcription by recruiting the chromatin multiprotein complex NuRD to target promoters. Negatively regulates expression of EGFR, a gene involved in cell proliferation, survival and migration. Its ability to repress genes of the EGFR pathway suggest it may act as a tumor suppressor. This Mus musculus (Mouse) protein is Zinc finger CCCH-type with G patch domain-containing protein (Zgpat).